A 258-amino-acid polypeptide reads, in one-letter code: Short-chain dehydrogenase/reductase olcF (258 aa).

Val12, Asp58, and Arg120 together coordinate NADP(+). Ser138 serves as the catalytic Proton donor. 3 residues coordinate NADP(+): Tyr152, Lys156, and Val185. Tyr152 acts as the Proton acceptor in catalysis. The Lowers pKa of active site Tyr role is filled by Lys156.

The protein belongs to the short-chain dehydrogenases/reductases (SDR) family.

The protein operates within secondary metabolite biosynthesis; terpenoid biosynthesis. Short-chain dehydrogenase/reductase; part of the gene cluster that mediates the biosynthesis of 15-deoxyoxalicine B. The first step of the pathway is the synthesis of nicotinyl-CoA from nicotinic acid by the nicotinic acid-CoA ligase olcI. Nicotinyl-CoA is then a substrate of polyketide synthase olcA to produce 4-hydroxy-6-(3-pyridinyl)-2H-pyran-2-one (HPPO) which is further prenylated by the polyprenyl transferase olcH to yield geranylgeranyl-HPPO. Geranylgeranyl pyrophosphate is provided by the cluster-specific geranylgeranyl pyrophosphate synthase olcC. The FAD-dependent monooxygenase olcE catalyzes the epoxidation of geranylgeranyl-HPPO and the terpene cyclase olcD catalyzes the cyclization of the terpenoid component, resulting in the formation of the tricyclic terpene moiety seen in predecaturin E. The cytochrome P450 monooxygenase then catalyzes the allylic oxidation of predecaturin E, which is followed by spirocylization with concomitant loss of one molecule of water to form decaturin E. Decaturin E is the substrate of the cytochrome P450 monooxygenase olcJ which hydroxylates it at the C-29 position to form decaturin F. The short-chain dehydrogenase/reductase olcF may catalyze the oxidation of decaturin F to generate the 29-hydroxyl-27-one intermediate, and subsequent hemiacetal formation probably leads to the formation of decaturin C. The dioxygenase olcK may be a peroxisomal enzyme that catalyzes the hydroxylation of decaturin C into decaturin A once decaturin C is shuttled into the peroxisome by the MFS transporter olcL. Finally the cytochrome P450 monooxygenase olcB catalyzes the oxidative rearrangement to yield 15-deoxyoxalicine B. In the absence of olcJ, decaturin E may be shunted to a pathway in which it is oxidized to a ketone, possibly by olcF, to form decaturin D, which undergoes further allylic oxidation to yield decaturin G. Moreover, in the absence of oclK or oclL, oclB can convert decaturin C into 15-deoxyoxalicine A. The protein is Short-chain dehydrogenase/reductase olcF of Penicillium canescens.